Here is a 186-residue protein sequence, read N- to C-terminus: Elongation factor P (186 aa).

The protein belongs to the elongation factor P family.

The protein localises to the cytoplasm. It participates in protein biosynthesis; polypeptide chain elongation. In terms of biological role, involved in peptide bond synthesis. Stimulates efficient translation and peptide-bond synthesis on native or reconstituted 70S ribosomes in vitro. Probably functions indirectly by altering the affinity of the ribosome for aminoacyl-tRNA, thus increasing their reactivity as acceptors for peptidyl transferase. This Prochlorococcus marinus (strain MIT 9301) protein is Elongation factor P.